A 100-amino-acid polypeptide reads, in one-letter code: Esterase PE11 (100 aa).

The PE domain occupies 4–94 (VTTRPDSIGE…TSYWLTELAN (91 aa)).

It belongs to the mycobacterial PE family.

It is found in the secreted. Its subcellular location is the cell wall. It carries out the reaction an acetyl ester + H2O = an aliphatic alcohol + acetate + H(+). It catalyses the reaction a butanoate ester + H2O = an aliphatic alcohol + butanoate + H(+). The enzyme catalyses an octanoate ester + H2O = an aliphatic alcohol + octanoate + H(+). In terms of biological role, involved in cell wall lipids remodeling and in virulence. Restricts the biofilm growth and is essential for the optimal intracellular survival of M.tuberculosis. Shows esterase activity with a preference for short-chain esters, particularly pNP-acetate (C2) and pNP-butyrate (C4). Has weaker activity with pNP-octanoate (C8), pNP-laurate (C12) and pNP-myristate (C14). Shows weak long-chain triacylglycerol (TAG) hydrolase activity in vitro. Not necessary for PPE17 stability or for its localization on the mycobacterial surface. This is Esterase PE11 from Mycobacterium tuberculosis (strain ATCC 25618 / H37Rv).